The primary structure comprises 666 residues: MGQTKSKIKSKYASYLSFIKILLKRGGVKVSTKNLIKLFQIIEQFCPWFPEQGTLDLKDWKRIGKELKQAGRKGNIIPLTVWNDWAIIKAALEPFQTEEDSVSVSDAPGSCIIDCNENTRKKSQKETESLHCEYVAEPVMAQSTQNVDYNQLQEVIYPETLKLEGKVPELVGPSESKPRGTSRLPAGQVPVTLQPQTQVKENKTQPPVAYQYWPPAELQYRPPLESQYGYPGMPPAPQGRAPYPQPPTRRLNPTAPPSRRGSELHEIIDKSRKEGDTEAWQFPVTLEPMPPGEGAQEGEPPTVEARYKSFSIKMLKDMKEGVKQYGPNSPYMRTLLDSIAHGHRLIPYDWEILAKSSLSPSQFLQFKTWWIDGVQEQVRRNRAANPPVNIDADQLLGIGQNWSTISQQALMQNEAIEQVRAICLRAWEKIQDPGSTCPSFNTVRQGSKEPYPDFVARLQDVAQKSIAIEKARKVIVELMAYENPNPECQSAIKPLKGKVPAGSDVISEYVKACDGMGGAMHKAMLMAQAITGVVLGGQVRTFGGKCYNCGQIGHLKKNCPVLNKQNITIQATTTGREPPDLCPRCKKGKHWASQCRSKFDKNGQPLSGNEQRGQPQAPQQTGAFPIQPFVPHGFQGQQPPLSQVFQGISQLPQYNNCPPPQAAVQQ.

G2 carries the N-myristoyl glycine lipid modification. 2 disordered regions span residues 170-189 (LVGPSESKPRGTSRLPAGQV) and 223-264 (PLES…GSEL). Residues 232-247 (GMPPAPQGRAPYPQPP) show a composition bias toward pro residues. 2 CCHC-type zinc fingers span residues 544–561 (GKCYNCGQIGHLKKNCPV) and 580–597 (DLCPRCKKGKHWASQCRS). The segment at 598–640 (KFDKNGQPLSGNEQRGQPQAPQQTGAFPIQPFVPHGFQGQQPP) is disordered. Residues 604-622 (QPLSGNEQRGQPQAPQQTG) show a composition bias toward polar residues.

This sequence belongs to the beta type-B retroviral Gag protein family. HERV class-II K(HML-2) gag subfamily. Myristoylation is essential for retroviral assembly. Alteration of the glycine residue leads to a block in the budding of particles and an accumulation of Gag inside the cell. In terms of processing, specific enzymatic cleavages may yield mature proteins.

Its subcellular location is the cell membrane. Its function is as follows. The products of the Gag polyproteins of infectious retroviruses perform highly complex orchestrated tasks during the assembly, budding, maturation, and infection stages of the viral replication cycle. During viral assembly, the proteins form membrane associations and self-associations that ultimately result in budding of an immature virion from the infected cell. Gag precursors also function during viral assembly to selectively bind and package two plus strands of genomic RNA. Endogenous Gag proteins may have kept, lost or modified their original function during evolution. The protein is Endogenous retrovirus group K member 19 Gag polyprotein (ERVK-19) of Homo sapiens (Human).